The sequence spans 263 residues: L-aspartate dehydrogenase (263 aa).

NAD(+) contacts are provided by A120 and N186. H216 is a catalytic residue.

This sequence belongs to the L-aspartate dehydrogenase family.

The enzyme catalyses L-aspartate + NADP(+) + H2O = oxaloacetate + NH4(+) + NADPH + H(+). It catalyses the reaction L-aspartate + NAD(+) + H2O = oxaloacetate + NH4(+) + NADH + H(+). It functions in the pathway cofactor biosynthesis; NAD(+) biosynthesis; iminoaspartate from L-aspartate (dehydrogenase route): step 1/1. In terms of biological role, specifically catalyzes the NAD or NADP-dependent dehydrogenation of L-aspartate to iminoaspartate. The sequence is that of L-aspartate dehydrogenase from Acinetobacter baylyi (strain ATCC 33305 / BD413 / ADP1).